The chain runs to 80 residues: Small ribosomal subunit protein bS16c (80 aa).

Belongs to the bacterial ribosomal protein bS16 family.

It localises to the plastid. It is found in the chloroplast. This Lotus japonicus (Lotus corniculatus var. japonicus) protein is Small ribosomal subunit protein bS16c.